The sequence spans 258 residues: tRNA (guanine-N(7)-)-methyltransferase (258 aa).

S-adenosyl-L-methionine is bound by residues Gly76, 99–100, 132–133, and Leu152; these read EI and NA. Asp155 is an active-site residue. 230–232 contributes to the S-adenosyl-L-methionine binding site; it reads TEE.

Belongs to the class I-like SAM-binding methyltransferase superfamily. TrmB family.

It localises to the nucleus. It catalyses the reaction guanosine(46) in tRNA + S-adenosyl-L-methionine = N(7)-methylguanosine(46) in tRNA + S-adenosyl-L-homocysteine. It participates in tRNA modification; N(7)-methylguanine-tRNA biosynthesis. Its function is as follows. Catalyzes the formation of N(7)-methylguanine at position 46 (m7G46) in tRNA. The protein is tRNA (guanine-N(7)-)-methyltransferase of Brugia malayi (Filarial nematode worm).